Reading from the N-terminus, the 283-residue chain is MSTKFKVFREFTSDDSFLNQVIPENITEFQVTLSLARDYDGNNSTNGKFIPYWDTEKVTPEVIKKFKKKYEPTALRVKVLVSIGNKNKQFPFTIGSDSNSEAWVSEATASLKSIIKTYNLDGIDVSYEDIAANEADFVNSVGGLVRNLKQNKLITVASFATSADAANNKFYNLLYAEYATFFDTVVFLSWVGFTPSRANPVASLEEKILAVANEYKAVKAFLVAYSTVAEDWANFSPPIFFITLHGLLGNSAVKGASIKVISDATASFPAKWIPEILLLAASK.

The region spanning 5-283 (FKVFREFTSD…PEILLLAASK (279 aa)) is the GH18 domain. E128 functions as the Proton donor in the catalytic mechanism.

It belongs to the glycosyl hydrolase 18 family. In terms of assembly, forms part of the RuBisCO complex. In terms of tissue distribution, leaves.

The sequence is that of RuBisCO-associated protein from Glycine max (Soybean).